A 109-amino-acid chain; its full sequence is Ribulose bisphosphate carboxylase small subunit (109 aa).

The protein belongs to the RuBisCO small chain family. Heterohexadecamer of 8 large and 8 small subunits. Forms complexes of many stoichiometries with Raf1 and RbcL.

It is found in the carboxysome. In terms of biological role, ruBisCO catalyzes two reactions: the carboxylation of D-ribulose 1,5-bisphosphate, the primary event in carbon dioxide fixation, as well as the oxidative fragmentation of the pentose substrate in the photorespiration process. Both reactions occur simultaneously and in competition at the same active site. Although the small subunit is not catalytic it is essential for maximal activity. The polypeptide is Ribulose bisphosphate carboxylase small subunit (Nostoc sp. (strain PCC 7120 / SAG 25.82 / UTEX 2576)).